The following is an 82-amino-acid chain: Small ribosomal subunit protein uS15 (82 aa).

The protein belongs to the universal ribosomal protein uS15 family. As to quaternary structure, part of the 30S ribosomal subunit. Forms a bridge to the 50S subunit in the 70S ribosome, contacting the 23S rRNA.

In terms of biological role, one of the primary rRNA binding proteins, it binds directly to 16S rRNA where it helps nucleate assembly of the platform of the 30S subunit by binding and bridging several RNA helices of the 16S rRNA. Its function is as follows. Forms an intersubunit bridge (bridge B4) with the 23S rRNA of the 50S subunit in the ribosome. The chain is Small ribosomal subunit protein uS15 from Pelagibacter ubique (strain HTCC1062).